Reading from the N-terminus, the 404-residue chain is 2,3-diketo-5-methylthiopentyl-1-phosphate enolase (404 aa).

Catalysis depends on lysine 91, which acts as the Proton acceptor. Residues lysine 140, 166-169 (KDDE), histidine 257, glycine 329, and 351-352 (GG) each bind substrate. The Mg(2+) site is built by lysine 166, aspartate 168, and glutamate 169. Lysine 166 bears the N6-carboxylysine mark.

Belongs to the RuBisCO large chain family. Type IV subfamily. Homodimer. It depends on Mg(2+) as a cofactor.

It carries out the reaction 5-methylsulfanyl-2,3-dioxopentyl phosphate = 2-hydroxy-5-methylsulfanyl-3-oxopent-1-enyl phosphate. Its pathway is amino-acid biosynthesis; L-methionine biosynthesis via salvage pathway; L-methionine from S-methyl-5-thio-alpha-D-ribose 1-phosphate: step 3/6. Catalyzes the enolization of 2,3-diketo-5-methylthiopentyl-1-phosphate (DK-MTP-1-P) into 2-hydroxy-3-keto-5-methylthiopentenyl-1-phosphate (HK-MTPenyl-1-P). This Bacillus velezensis (strain DSM 23117 / BGSC 10A6 / LMG 26770 / FZB42) (Bacillus amyloliquefaciens subsp. plantarum) protein is 2,3-diketo-5-methylthiopentyl-1-phosphate enolase.